Reading from the N-terminus, the 970-residue chain is Type III restriction-modification enzyme EcoP15I Res subunit (970 aa).

The segment at 75–540 is helicase-like domain; the sequence is AKSNIIDVSM…EVGRGLRLPV (466 aa). Residues threonine 91, glycine 122, phenylalanine 126, and aspartate 226 each coordinate AMP. Residues 894-918 are endonuclease domain; that stretch reads TYSPDFAYVVKTAEGDYLNFIIETK.

Belongs to the type III restriction-modification system Res protein family. As to quaternary structure, a heterotetramer with stoichiometry Res(2)Mod(2). A heterotrimer with stoichiometry Res(1)Mod(2). The cofactor is Mg(2+). It depends on S-adenosyl-L-methionine as a cofactor.

It catalyses the reaction Endonucleolytic cleavage of DNA to give specific double-stranded fragments with terminal 5'-phosphates.. Functionally, a type III restriction enzyme that recognizes 2 inversely oriented double-stranded sequences 5'-CAGCAG-3' and cleaves DNA 25-27 base pairs downstream of one site. DNA restriction requires both the Res and Mod subunits. DNA topology affects its action; relaxed and negatively supercoiled DNA are digested but positively supercoiled DNA is not a good substrate. Interacts with DNA approximately one half-turn downstream of the recognition site. After binding to one recognition site undergoes random one-dimensional diffusion along DNA until it collides with a stationary enzyme bound to the second DNA site, which is when DNA cleavage occurs. This is Type III restriction-modification enzyme EcoP15I Res subunit from Escherichia coli.